The chain runs to 512 residues: UDP-N-acetylglucosamine--peptide N-acetylglucosaminyltransferase GtfA subunit (512 aa).

16 to 19 (GVEY) contributes to the UDP binding site. Residue His251 coordinates N-acetyl-D-glucosamine. UDP contacts are provided by residues 393–394 (QH) and 413–416 (EGFG).

The protein belongs to the glycosyltransferase group 1 family. Glycosyltransferase 4 subfamily. As to quaternary structure, forms a heterotetramer with 2 subunits each of GtfA and GtfB. Part of the accessory SecA2/SecY2 protein translocation apparatus.

The protein resides in the cytoplasm. Its subcellular location is the cell membrane. The enzyme catalyses L-seryl-[protein] + UDP-N-acetyl-alpha-D-glucosamine = 3-O-[N-acetyl-alpha-D-glucosaminyl]-L-seryl-[protein] + UDP + H(+). It functions in the pathway protein modification; protein glycosylation. Required for polymorphic O-glycosylation of the serine-rich repeat protein (SRRP) in this bacteria. Catalyzes the first step in glycosylation by transferring N-acetylglucosamine from UDP-GlcNAc to serine residues in the substrate protein. Part of the accessory SecA2/SecY2 system specifically required to export serine-rich repeat cell wall proteins encoded in the same operon. The GtfA-GtfB complex adds GlcNAc from UDP-GlcNAc to SRRP (experimentally characterized with a truncated SSR1 construct); the alpha linkage was shown for this enzyme but not the residues glycosylated on SRRP. The sequence is that of UDP-N-acetylglucosamine--peptide N-acetylglucosaminyltransferase GtfA subunit from Limosilactobacillus reuteri subsp. suis (strain ATCC 53608 / LMG 31752 / 1063) (Lactobacillus reuteri).